The chain runs to 730 residues: Wall-associated receptor kinase-like 3 (730 aa).

An N-terminal signal peptide occupies residues 1–25 (MKTKTYNFRYIVASVLTLLMNGSSA). Topologically, residues 26–357 (ATPPNSNSSS…AKLAHVLRGV (332 aa)) are extracellular. Asn-32, Asn-38, Asn-68, Asn-90, Asn-119, Asn-132, Asn-212, Asn-233, and Asn-269 each carry an N-linked (GlcNAc...) asparagine glycan. Positions 283-340 (CLCRYGYFSRMSYRSCYCGSGYRGNPYIRGGCIDIDECEVPNKCGEDTCVNMAGRYSC) are atypical EGF-like. 3 disulfides stabilise this stretch: Cys-285–Cys-298, Cys-320–Cys-331, and Cys-326–Cys-340. The chain crosses the membrane as a helical span at residues 358 to 378 (LIGLLGLLFFVIGIFGLYKFI). At 379–730 (RKRRRIIRSM…LMEINRIYDS (352 aa)) the chain is on the cytoplasmic side. In terms of domain architecture, Protein kinase spans 428-699 (FSIDRVLGQG…REVSIKLERI (272 aa)). ATP-binding positions include 434–442 (LGQGGQGTV) and Lys-456. Asp-553 acts as the Proton acceptor in catalysis. The segment at 703-730 (PKDLDVHTENEEEEEEDQLMEINRIYDS) is disordered. Acidic residues predominate over residues 712-721 (NEEEEEEDQL).

The protein belongs to the protein kinase superfamily. Ser/Thr protein kinase family. As to expression, preferentially expressed in roots and flowers.

It localises to the membrane. It carries out the reaction L-seryl-[protein] + ATP = O-phospho-L-seryl-[protein] + ADP + H(+). The catalysed reaction is L-threonyl-[protein] + ATP = O-phospho-L-threonyl-[protein] + ADP + H(+). Its function is as follows. Serine/threonine-protein kinase that may function as a signaling receptor of extracellular matrix component. This Arabidopsis thaliana (Mouse-ear cress) protein is Wall-associated receptor kinase-like 3 (WAKL3).